The sequence spans 420 residues: Mannose-1-phosphate guanylyltransferase regulatory subunit alpha (420 aa).

The segment at 2-251 (LKAVILIGGP…DGIWSQIKSA (250 aa)) is substrate-binding domain. Glutamate 85 and glutamine 247 together coordinate GDP-alpha-D-mannose. Positions 273 to 420 (LARHTAGGPR…SRSFTNQIIL (148 aa)) are hexapeptide repeat domain. The interval 356 to 384 (TPNDPNPNDPRARMDSESLFKDGKLLPAI) is C-loop.

The protein belongs to the transferase hexapeptide repeat family. In terms of assembly, component of the GMPPA-GMPPB mannose-1-phosphate guanylyltransferase complex composed of 4 GMPPA subunits and 8 GMPPB subunits; the complex is organized into three layers, a central layer made up of 2 GMPPA dimers sandwiched between two layers each made up of 2 GMPPB dimers.

The protein resides in the cytoplasm. Regulatory subunit of the GMPPA-GMPPB mannose-1-phosphate guanylyltransferase complex; reduces the catalytic activity of GMPPB when part of the complex. Mediates allosteric feedback inhibition of GMPPB catalytic activity upon binding GDP-alpha-D-mannose. Together with GMPPB regulates GDP-alpha-D-mannose levels. The polypeptide is Mannose-1-phosphate guanylyltransferase regulatory subunit alpha (Gmppa) (Rattus norvegicus (Rat)).